A 60-amino-acid chain; its full sequence is Small, acid-soluble spore protein H 1 (60 aa).

The disordered stretch occupies residues 39-60 (IHPLDNPNQKQSVPVASLEEHS).

Belongs to the SspH family.

It is found in the spore core. This is Small, acid-soluble spore protein H 1 from Geobacillus kaustophilus (strain HTA426).